The sequence spans 320 residues: ATP-dependent 6-phosphofructokinase (320 aa).

Residue Gly12 participates in ATP binding. An ADP-binding site is contributed by Arg22–Arg26. ATP is bound by residues Arg73–Phe74 and Gly103–Ser106. A Mg(2+)-binding site is contributed by Asp104. Thr126–Asp128 serves as a coordination point for substrate. The Proton acceptor role is filled by Asp128. Arg155 contacts ADP. Substrate is bound by residues Arg163 and Met170–Arg172. ADP-binding positions include Gly186–Glu188, Lys212, and Lys214–His216. Substrate-binding positions include Glu223, Arg244, and His250–Arg253.

This sequence belongs to the phosphofructokinase type A (PFKA) family. ATP-dependent PFK group I subfamily. Prokaryotic clade 'B1' sub-subfamily. As to quaternary structure, homotetramer. Mg(2+) is required as a cofactor.

It is found in the cytoplasm. It carries out the reaction beta-D-fructose 6-phosphate + ATP = beta-D-fructose 1,6-bisphosphate + ADP + H(+). The protein operates within carbohydrate degradation; glycolysis; D-glyceraldehyde 3-phosphate and glycerone phosphate from D-glucose: step 3/4. With respect to regulation, allosterically activated by ADP and other diphosphonucleosides, and allosterically inhibited by phosphoenolpyruvate. Its function is as follows. Catalyzes the phosphorylation of D-fructose 6-phosphate to fructose 1,6-bisphosphate by ATP, the first committing step of glycolysis. In Photobacterium profundum (strain SS9), this protein is ATP-dependent 6-phosphofructokinase.